We begin with the raw amino-acid sequence, 213 residues long: Adenylate kinase (213 aa).

10–15 (GAGKGT) contributes to the ATP binding site. Residues 30-59 (STGDMFRAAMANQTEMGVLAKSYIDKGDLV) form an NMP region. Residues threonine 31, arginine 36, 57–59 (DLV), 86–89 (GYPR), and glutamine 93 contribute to the AMP site. The interval 127–160 (GRIINKKTGETFHKIFNPPVGDYKEEDFYQREDD) is LID. Residues arginine 128 and 137 to 138 (TF) each bind ATP. 2 residues coordinate AMP: arginine 157 and arginine 168. Lysine 196 lines the ATP pocket.

It belongs to the adenylate kinase family. In terms of assembly, monomer.

It localises to the cytoplasm. It carries out the reaction AMP + ATP = 2 ADP. The protein operates within purine metabolism; AMP biosynthesis via salvage pathway; AMP from ADP: step 1/1. Functionally, catalyzes the reversible transfer of the terminal phosphate group between ATP and AMP. Plays an important role in cellular energy homeostasis and in adenine nucleotide metabolism. This Streptococcus equi subsp. equi (strain 4047) protein is Adenylate kinase.